A 582-amino-acid polypeptide reads, in one-letter code: V-type ATP synthase alpha chain (582 aa).

Position 231–238 (231–238 (GPFGSGKT)) interacts with ATP.

This sequence belongs to the ATPase alpha/beta chains family.

It catalyses the reaction ATP + H2O + 4 H(+)(in) = ADP + phosphate + 5 H(+)(out). Its function is as follows. Produces ATP from ADP in the presence of a proton gradient across the membrane. The V-type alpha chain is a catalytic subunit. This is V-type ATP synthase alpha chain from Deinococcus geothermalis (strain DSM 11300 / CIP 105573 / AG-3a).